The primary structure comprises 150 residues: UPF0756 membrane protein ACICU_02320 (150 aa).

The next 4 membrane-spanning stretches (helical) occupy residues 1 to 21 (MLAQ…CGLL), 45 to 65 (FFPY…TIGV), 83 to 103 (FISF…WLGG), and 115 to 135 (VVAG…GVPV).

It belongs to the UPF0756 family.

Its subcellular location is the cell membrane. The protein is UPF0756 membrane protein ACICU_02320 of Acinetobacter baumannii (strain ACICU).